Reading from the N-terminus, the 453-residue chain is Protein FAM117A (453 aa).

A compositionally biased stretch (gly residues) spans 1–25 (MAGAAAGGRGGGAWGPGRGGAGGLR). The tract at residues 1–45 (MAGAAAGGRGGGAWGPGRGGAGGLRRGCSPPAPAGSPRAGLQPLR) is disordered. Residues Ser29 and Ser67 each carry the phosphoserine modification. Residues 149–175 (TDHRKEISKLKQQLQRTKLSRSGKEKE) are a coiled coil. The tract at residues 159-201 (KQQLQRTKLSRSGKEKERGSPLLGDHAVRGALRASPPSFPSGS) is disordered. Phosphoserine occurs at positions 178, 193, 201, and 213. Low complexity predominate over residues 269–278 (SSPSMSLASP). Residues 269–320 (SSPSMSLASPQPCGLASHEEHRGAAEELASTPNDKASSPGHPAFLEDGSPSP) are disordered. Thr299 carries the phosphothreonine modification. Phosphoserine is present on residues Ser319 and Ser327. Thr354 carries the phosphothreonine modification. The span at 406–416 (GSPLPPASPRP) shows a compositional bias: pro residues. A disordered region spans residues 406–453 (GSPLPPASPRPPPRKDPEASKASPLPFEPWQRTPPSEEPVLFQSSLMV). Phosphoserine is present on residues Ser413 and Ser428.

This sequence belongs to the FAM117 family.

The protein is Protein FAM117A (FAM117A) of Homo sapiens (Human).